The chain runs to 162 residues: UPF0114 protein SO_3997 (162 aa).

Helical transmembrane passes span tyrosine 10–isoleucine 32, leucine 53–phenylalanine 75, and isoleucine 136–leucine 156.

This sequence belongs to the UPF0114 family.

The protein resides in the cell membrane. The sequence is that of UPF0114 protein SO_3997 from Shewanella oneidensis (strain ATCC 700550 / JCM 31522 / CIP 106686 / LMG 19005 / NCIMB 14063 / MR-1).